The following is a 156-amino-acid chain: Movement protein P17 (156 aa).

The interval 38 to 54 is homodimerization; it reads AEDAEEEAIAAQEELEF. Disordered stretches follow at residues 55 to 80 and 131 to 156; these read PEDE…EVSP and AKYH…IKRG. The RNA-binding stretch occupies residues 57–156; it reads DEAQARHSCL…RAAPKLIKRG (100 aa). 4 positions are modified to phosphoserine: serine 71, serine 79, serine 137, and serine 140. The span at 144–156 shows a compositional bias: basic residues; the sequence is KLRRAAPKLIKRG.

Belongs to the polerovirus movement protein family. In terms of assembly, homodimer. Heterodimer with movement protein P3a. In terms of processing, expressed as a nonphosphorylated 20kDa form and a phosphorylated 22kDa form. Phosphorylated by a host PKC-related kinase. Serine phosphorylation is required for plamodesma targeting.

The protein resides in the host cell junction. Its subcellular location is the host plasmodesma. The protein localises to the host mitochondrion outer membrane. It is found in the host Golgi apparatus. It localises to the host chloroplast envelope. Functionally, together with movement protein P3a, facilitates long-distance movement of virions in host. Transports viral genome to neighboring plant cells directly through plasmosdesmata, without any budding. The movement protein allows efficient cell to cell propagation, by bypassing the host cell wall barrier. Binds ssRNA. The sequence is that of Movement protein P17 from Solanum tuberosum (Potato).